The primary structure comprises 173 residues: Large ribosomal subunit protein bL12m (173 aa).

The transit peptide at 1-33 (MFRIASRQTRNLRALSSSKNWARSLVNTRSFRA) directs the protein to the mitochondrion.

This sequence belongs to the bacterial ribosomal protein bL12 family. Component of the mitochondrial large ribosomal subunit (mt-LSU). Mature yeast 74S mitochondrial ribosomes consist of a small (37S) and a large (54S) subunit. The 37S small subunit contains a 15S ribosomal RNA (15S mt-rRNA) and at least 32 different proteins. The 54S large subunit contains a 21S rRNA (21S mt-rRNA) and at least 45 different proteins.

It localises to the mitochondrion. Its function is as follows. Component of the mitochondrial ribosome (mitoribosome), a dedicated translation machinery responsible for the synthesis of mitochondrial genome-encoded proteins, including at least some of the essential transmembrane subunits of the mitochondrial respiratory chain. The mitoribosomes are attached to the mitochondrial inner membrane and translation products are cotranslationally integrated into the membrane. In Schizosaccharomyces pombe (strain 972 / ATCC 24843) (Fission yeast), this protein is Large ribosomal subunit protein bL12m (mrpl12).